A 69-amino-acid chain; its full sequence is Large ribosomal subunit protein bL31 (69 aa).

Residues C17, C19, C37, and C40 each coordinate Zn(2+).

Belongs to the bacterial ribosomal protein bL31 family. Type A subfamily. Part of the 50S ribosomal subunit. It depends on Zn(2+) as a cofactor.

Functionally, binds the 23S rRNA. This chain is Large ribosomal subunit protein bL31, found in Caldicellulosiruptor bescii (strain ATCC BAA-1888 / DSM 6725 / KCTC 15123 / Z-1320) (Anaerocellum thermophilum).